Consider the following 151-residue polypeptide: Hemoglobin-2 (151 aa).

An N-acetylthreonine modification is found at T2. The Globin domain occupies 3–148; the sequence is TLTNPQKAAI…ICKTLGDYMK (146 aa). H97 is a heme b binding site.

Belongs to the globin family. In terms of assembly, homotetramer.

It is found in the cytoplasm. The polypeptide is Hemoglobin-2 (Phacoides pectinatus (Thick lucine)).